The following is a 181-amino-acid chain: MATTTHDAGHGAAEAAHGSSGMPQLDFSTYGNQIFWLLVTLVVIYLILSRIALPRIAAILNERQGTITNDLAAAEDLKAKAVEAENAYNKALADARAEAQRIAAETRAEIQAEVDEAIAKADAEISAKAAESEKAIAEIRAGALESVKVVAADTASALVAALGGKDDADAVKAAVAERTEG.

Over residues 1–18 the composition is skewed to low complexity; the sequence is MATTTHDAGHGAAEAAHG. A disordered region spans residues 1 to 20; that stretch reads MATTTHDAGHGAAEAAHGSS. The helical transmembrane segment at 34-54 threads the bilayer; the sequence is IFWLLVTLVVIYLILSRIALP.

This sequence belongs to the ATPase B chain family. F-type ATPases have 2 components, F(1) - the catalytic core - and F(0) - the membrane proton channel. F(1) has five subunits: alpha(3), beta(3), gamma(1), delta(1), epsilon(1). F(0) has three main subunits: a(1), b(2) and c(10-14). The alpha and beta chains form an alternating ring which encloses part of the gamma chain. F(1) is attached to F(0) by a central stalk formed by the gamma and epsilon chains, while a peripheral stalk is formed by the delta and b chains.

Its subcellular location is the cell inner membrane. Its function is as follows. F(1)F(0) ATP synthase produces ATP from ADP in the presence of a proton or sodium gradient. F-type ATPases consist of two structural domains, F(1) containing the extramembraneous catalytic core and F(0) containing the membrane proton channel, linked together by a central stalk and a peripheral stalk. During catalysis, ATP synthesis in the catalytic domain of F(1) is coupled via a rotary mechanism of the central stalk subunits to proton translocation. Component of the F(0) channel, it forms part of the peripheral stalk, linking F(1) to F(0). The b'-subunit is a diverged and duplicated form of b found in plants and photosynthetic bacteria. The polypeptide is ATP synthase subunit b 2 (atpF2) (Ruegeria sp. (strain TM1040) (Silicibacter sp.)).